The primary structure comprises 290 residues: MEGIILKGIGGFYYVKTEERVYECKARGKFRNKKLTPMVGDRVIITPNDNNYGAIEEICTRDNYLIRPQVANISQAFIVFALKNPDVNLDLLNKFLIQCELKNIKSIVCFNKIDLYGDYENHEAVKMVSDAGYDYIFLKAKEETNLDELKSKLKGNINVFCGPSGVGKSTILNKLVGKEVMETGIISERLKRGKHTTRHSELVEVNNGFVVDTPGFSTLDLKFDSKEELKDYFREFYEYKDQCKFNGCLHHKEPKCGVKDAVNNEEINKDRYEFYVKTLEEIIQGGRNKW.

The CP-type G domain maps to 62-219 (DNYLIRPQVA…VVDTPGFSTL (158 aa)). Residues 111-114 (NKID) and 162-170 (GPSGVGKST) each bind GTP. Zn(2+) contacts are provided by C243, C248, H250, and C256.

The protein belongs to the TRAFAC class YlqF/YawG GTPase family. RsgA subfamily. In terms of assembly, monomer. Associates with 30S ribosomal subunit, binds 16S rRNA. Zn(2+) serves as cofactor.

The protein localises to the cytoplasm. Its function is as follows. One of several proteins that assist in the late maturation steps of the functional core of the 30S ribosomal subunit. Helps release RbfA from mature subunits. May play a role in the assembly of ribosomal proteins into the subunit. Circularly permuted GTPase that catalyzes slow GTP hydrolysis, GTPase activity is stimulated by the 30S ribosomal subunit. This chain is Small ribosomal subunit biogenesis GTPase RsgA, found in Clostridium novyi (strain NT).